Here is a 365-residue protein sequence, read N- to C-terminus: Glycosyltransferase 8 domain-containing protein 1 (365 aa).

Residues 1 to 4 lie on the Cytoplasmic side of the membrane; that stretch reads MTVR. A helical; Signal-anchor for type II membrane protein membrane pass occupies residues 5-22; that stretch reads RVNVVILVLLVVAFLIVL. Residues 23–365 are Lumenal-facing; that stretch reads HRNLLNLNDF…HPIRKHVEEK (343 aa). N-linked (GlcNAc...) asparagine glycosylation is found at Asn102, Asn181, Asn245, and Asn253.

It belongs to the glycosyltransferase 8 family.

It localises to the membrane. The polypeptide is Glycosyltransferase 8 domain-containing protein 1 (glt8d1) (Danio rerio (Zebrafish)).